The chain runs to 155 residues: Small ribosomal subunit protein uS17 (155 aa).

N-acetylalanine is present on A2.

It belongs to the universal ribosomal protein uS17 family.

This is Small ribosomal subunit protein uS17 from Drosophila yakuba (Fruit fly).